The primary structure comprises 261 residues: MLRRVLASKRASLILMGMLSFYIIVSASAPAYAMHIMEGYLPAGWAAFWWLVALPFMLLGVRSLTRITKANPELKLLLALAGAFTFVLSALKLPSVTGSCSHPTGTGLGSVLFGPLAMSVLGSLVLLFQALLLAHGGLTTLGANAFSMAIAGPFAAYWIYHLTIKLTGKQRIAIFLAATLADLLTYIITSVQLALAFPAPVGGFIASFAKFAGIFAITQIPLAISEGLLTVLVWNWLQSYSPQELQLLKLIQGESQSHESI.

Residues 1–33 form the signal peptide; it reads MLRRVLASKRASLILMGMLSFYIIVSASAPAYA. A run of 7 helical transmembrane segments spans residues 41-61, 76-96, 108-128, 140-160, 172-192, 197-217, and 220-240; these read LPAG…LLGV, LLLA…LPSV, LGSV…VLLF, TLGA…YWIY, IAIF…TSVQ, FPAP…IFAI, and IPLA…LQSY.

It belongs to the CbiM family. As to quaternary structure, forms an energy-coupling factor (ECF) transporter complex composed of an ATP-binding protein (A component, CbiO), a transmembrane protein (T component, CbiQ) and 2 possible substrate-capture proteins (S components, CbiM and CbiN) of unknown stoichimetry.

Its subcellular location is the cell inner membrane. It participates in cofactor biosynthesis; adenosylcobalamin biosynthesis. Its function is as follows. Part of the energy-coupling factor (ECF) transporter complex CbiMNOQ involved in cobalt import. The chain is Cobalt transport protein CbiM from Nostoc sp. (strain PCC 7120 / SAG 25.82 / UTEX 2576).